Reading from the N-terminus, the 57-residue chain is UPF0391 membrane protein RPC_2356 (57 aa).

Transmembrane regions (helical) follow at residues 6–26 (WALIFFVVSVIVGVLGFTGIS) and 35–55 (ILFYIFLVIFLVLLILGLTIF).

This sequence belongs to the UPF0391 family.

It localises to the cell membrane. This is UPF0391 membrane protein RPC_2356 from Rhodopseudomonas palustris (strain BisB18).